Consider the following 757-residue polypeptide: Exo-alpha-(1-&gt;6)-L-arabinopyranosidase (757 aa).

D232 is a catalytic residue.

Belongs to the glycosyl hydrolase 3 family. Homotetramer.

Its activity is regulated as follows. Completely inhibited by Cu(2+) and Fe(2+). In terms of biological role, catalyzes the hydrolysis of a non-reducing terminal alpha-L-arabinopyranosidic linkage in ginsenoside Rb2 (alpha-L-arabinopyranosyl-(1-&gt;6)-alpha-D-glucopyranosyl) to release alpha-D-glucopyranosyl (Rd). It is not able to hydrolyze alpha-L-arabinofuranosyl-(1-&gt;6)-alpha-D-glucopyranosyl (Rc). In Bifidobacterium breve (strain ACS-071-V-Sch8b), this protein is Exo-alpha-(1-&gt;6)-L-arabinopyranosidase.